The chain runs to 215 residues: MLAGQLEARDPKEGTHPEDPCPGAGAVMEKTAVAAEVLTEDCNTGEMPPLQQQIIRLHQELGRQKSLWADVHGKLRSHIDALREQNMELREKLRALQLQRWKARKKSAASPHAGQESHTLALEPAFGKISPLSADEETIPKYAGHKNQSATLLGQRSSSNNSAPPKPMSLKIERISSWKTPPQENRDKNLSRRRQDRRATPTGRPTPCAERRGGV.

Residues methionine 1–glycine 25 form a disordered region. Over residues glutamate 7–aspartate 19 the composition is skewed to basic and acidic residues. Residues alanine 69–serine 110 adopt a coiled-coil conformation. The segment at leucine 75 to leucine 96 is leucine-zipper. The span at alanine 150–alanine 163 shows a compositional bias: polar residues. The tract at residues alanine 150 to valine 215 is disordered.

The protein belongs to the TCP10 family. As to quaternary structure, self-associates (via leucine zipper). Interacts (via leucine zipper) with ZIPK/DAPK3 (via leucine zipper). Interacts with MAD4. As to expression, expressed in liver and testis. Expressed in the seminiferous tubules (at protein level).

The protein resides in the nucleus. Functionally, may be involved in transcriptional regulation. Has in vitro transcription inhibition activity. Acts as a tumor suppressor in hepatocellular carcinoma (HCC) cells. This chain is T-complex protein 10A homolog 1 (TCP10L), found in Homo sapiens (Human).